Reading from the N-terminus, the 531-residue chain is Cytochrome P450 monooxygenase acuC (531 aa).

The helical transmembrane segment at 3-23 (PIVWLLGGAIALLVVVIRAAW) threads the bilayer. Cys447 provides a ligand contact to heme.

Belongs to the cytochrome P450 family. Heme is required as a cofactor.

Its subcellular location is the endoplasmic reticulum membrane. It carries out the reaction 3-methylphenol + reduced [NADPH--hemoprotein reductase] + O2 = 3-hydroxybenzyl alcohol + oxidized [NADPH--hemoprotein reductase] + H2O + H(+). The protein operates within secondary metabolite biosynthesis. Cytochrome P450 monooxygenase; part of the gene cluster that mediates the biosynthesis of aculins. The pathway begins with the synthesis of 6-methylsalicylic acid by the polyketide synthase (PKS) acuA via condensation of acetate and malonate units. The 6-methylsalicylic acid decarboxylase acuB then catalyzes the decarboxylation of 6-methylsalicylic acid to yield m-cresol (also known as 3-methylphenol). These first reactions occur in the cytosol. The intermediate m-cresol is then transported into the endoplasmic reticulum where the cytochrome P450 monooxygenase acuC converts it to m-hydroxybenzyl alcohol, which is further converted to gentisyl alcohol by the cytochrome P450 monooxygenase acuD. Gentisyl alcohol is further oxidized by the oxidoreductase acuE that probably catalyzes hydroxylation of the aromatic ring. The aromatic system might then be opened by oxidation through a Baeyer-Villiger type of oxidation, which could be catalyzed by acuF, with the carboxylic acid at C-1 subsequently reduced to an aldehyde by acuG. Subsequently, a hemiacetal is formed, before the dehydrogenase acuH would reduce the double bond between C-4 and C-6. Finally, keto-enol tautomerism results in formation of aculinic acid, which exists as two diastereomers (both R/S configurations at C-1) by non-enzymatic hemiacetal formation. The carboxypeptidase acuI could be involved in the linking of aculinic acid to an aculene A moiety produced by the aculene biosynthesis cluster and which leads to the production of aculin A. AcuI may also be involved in the attachment of proline to aculinic acid to form epi-aculins A and B. In Aspergillus aculeatus (strain ATCC 16872 / CBS 172.66 / WB 5094), this protein is Cytochrome P450 monooxygenase acuC.